A 217-amino-acid chain; its full sequence is Uracil phosphoribosyltransferase (217 aa).

Residues R84, R109, and 137 to 145 each bind 5-phospho-alpha-D-ribose 1-diphosphate; that span reads DPMLATGGS. Uracil-binding positions include I202 and 207–209; that span reads GDA. D208 provides a ligand contact to 5-phospho-alpha-D-ribose 1-diphosphate.

This sequence belongs to the UPRTase family. Mg(2+) is required as a cofactor.

It catalyses the reaction UMP + diphosphate = 5-phospho-alpha-D-ribose 1-diphosphate + uracil. Its pathway is pyrimidine metabolism; UMP biosynthesis via salvage pathway; UMP from uracil: step 1/1. Allosterically activated by GTP. Its function is as follows. Catalyzes the conversion of uracil and 5-phospho-alpha-D-ribose 1-diphosphate (PRPP) to UMP and diphosphate. In Synechococcus elongatus (strain ATCC 33912 / PCC 7942 / FACHB-805) (Anacystis nidulans R2), this protein is Uracil phosphoribosyltransferase.